The primary structure comprises 409 residues: MKTYLVGGAVRDELLGLPVRERDWVVVGATAAQMLDLGYRQVGRDFPVFLHPETHEEHALARTERKTAPGYRGFVVHAEPDVTLEEDLLRRDLTINAMARDEAGGLIDPFNGRADLEARLLRHVSPAFAEDPVRILRVARFAARFAHLGFRVADETRALMRRMVAAGEVDALVPERVWQEMERALGEGSPATFFEVLRDCGALAVLFPEIERLFGVPQPPKYHPEIDTGVHTLMVLTQAARLSADATIRFAALTHDLGKGTTPADILPSHHGHEQRSVDLVHALCDRFRIPNAYRDLAVMVARWHGYSHRALELRPDTVLKALEGLDAFRRPERFEPFLLACEADYRGRTGFEDRPYPQADYLRAAHARCLAISAKDLVNEGLTGKAIGEALHARRVQALKQLKAEWGG.

ATP contacts are provided by Gly8 and Arg11. Gly8 and Arg11 together coordinate CTP. Mg(2+) is bound by residues Glu21 and Asp23. The ATP site is built by Arg91, Arg137, and Arg140. 3 residues coordinate CTP: Arg91, Arg137, and Arg140. Positions Thr228–Phe329 constitute an HD domain.

This sequence belongs to the tRNA nucleotidyltransferase/poly(A) polymerase family. Bacterial CCA-adding enzyme type 1 subfamily. In terms of assembly, monomer. Can also form homodimers and oligomers. Requires Mg(2+) as cofactor. Ni(2+) is required as a cofactor.

The catalysed reaction is a tRNA precursor + 2 CTP + ATP = a tRNA with a 3' CCA end + 3 diphosphate. The enzyme catalyses a tRNA with a 3' CCA end + 2 CTP + ATP = a tRNA with a 3' CCACCA end + 3 diphosphate. Catalyzes the addition and repair of the essential 3'-terminal CCA sequence in tRNAs without using a nucleic acid template. Adds these three nucleotides in the order of C, C, and A to the tRNA nucleotide-73, using CTP and ATP as substrates and producing inorganic pyrophosphate. tRNA 3'-terminal CCA addition is required both for tRNA processing and repair. Also involved in tRNA surveillance by mediating tandem CCA addition to generate a CCACCA at the 3' terminus of unstable tRNAs. While stable tRNAs receive only 3'-terminal CCA, unstable tRNAs are marked with CCACCA and rapidly degraded. The chain is Multifunctional CCA protein from Thioalkalivibrio sulfidiphilus (strain HL-EbGR7).